Here is a 131-residue protein sequence, read N- to C-terminus: Methylglyoxal synthase (131 aa).

Residues Met-1–Lys-131 form the MGS-like domain. Substrate contacts are provided by residues His-8, Lys-12, Thr-34 to Thr-37, and Ser-54 to Gly-55. Asp-60 serves as the catalytic Proton donor/acceptor. His-87 provides a ligand contact to substrate.

This sequence belongs to the methylglyoxal synthase family.

The catalysed reaction is dihydroxyacetone phosphate = methylglyoxal + phosphate. Its function is as follows. Catalyzes the formation of methylglyoxal from dihydroxyacetone phosphate. In Bacillus cereus (strain AH820), this protein is Methylglyoxal synthase.